The chain runs to 136 residues: Holo-[acyl-carrier-protein] synthase (136 aa).

The Mg(2+) site is built by Asp-8 and Glu-57.

It belongs to the P-Pant transferase superfamily. AcpS family. Requires Mg(2+) as cofactor.

It is found in the cytoplasm. It carries out the reaction apo-[ACP] + CoA = holo-[ACP] + adenosine 3',5'-bisphosphate + H(+). Functionally, transfers the 4'-phosphopantetheine moiety from coenzyme A to a Ser of acyl-carrier-protein. In Methylobacterium radiotolerans (strain ATCC 27329 / DSM 1819 / JCM 2831 / NBRC 15690 / NCIMB 10815 / 0-1), this protein is Holo-[acyl-carrier-protein] synthase.